Here is a 339-residue protein sequence, read N- to C-terminus: Ketol-acid reductoisomerase (NADP(+)) (339 aa).

Residues 1 to 182 (MRVYYDRDAD…GGGRSGIIET (182 aa)) enclose the KARI N-terminal Rossmann domain. NADP(+) contacts are provided by residues 24-27 (YGSQ), R48, S51, S53, and 83-86 (DELQ). H108 is an active-site residue. Residue G134 participates in NADP(+) binding. Residues 183-328 (TFREECETDL…GRLRAMMPWI (146 aa)) enclose the KARI C-terminal knotted domain. 4 residues coordinate Mg(2+): D191, E195, E227, and E231. S252 serves as a coordination point for substrate.

This sequence belongs to the ketol-acid reductoisomerase family. Mg(2+) serves as cofactor.

The catalysed reaction is (2R)-2,3-dihydroxy-3-methylbutanoate + NADP(+) = (2S)-2-acetolactate + NADPH + H(+). It catalyses the reaction (2R,3R)-2,3-dihydroxy-3-methylpentanoate + NADP(+) = (S)-2-ethyl-2-hydroxy-3-oxobutanoate + NADPH + H(+). It participates in amino-acid biosynthesis; L-isoleucine biosynthesis; L-isoleucine from 2-oxobutanoate: step 2/4. Its pathway is amino-acid biosynthesis; L-valine biosynthesis; L-valine from pyruvate: step 2/4. Functionally, involved in the biosynthesis of branched-chain amino acids (BCAA). Catalyzes an alkyl-migration followed by a ketol-acid reduction of (S)-2-acetolactate (S2AL) to yield (R)-2,3-dihydroxy-isovalerate. In the isomerase reaction, S2AL is rearranged via a Mg-dependent methyl migration to produce 3-hydroxy-3-methyl-2-ketobutyrate (HMKB). In the reductase reaction, this 2-ketoacid undergoes a metal-dependent reduction by NADPH to yield (R)-2,3-dihydroxy-isovalerate. The polypeptide is Ketol-acid reductoisomerase (NADP(+)) (Rhodospirillum rubrum (strain ATCC 11170 / ATH 1.1.1 / DSM 467 / LMG 4362 / NCIMB 8255 / S1)).